Reading from the N-terminus, the 493-residue chain is Lysine--tRNA ligase (493 aa).

A 'HIGH' region motif is present at residues Pro-26–Asn-34. The 'KMSKS' region signature appears at Ala-270–Ser-274.

The protein belongs to the class-I aminoacyl-tRNA synthetase family.

The protein localises to the cytoplasm. It catalyses the reaction tRNA(Lys) + L-lysine + ATP = L-lysyl-tRNA(Lys) + AMP + diphosphate. This is Lysine--tRNA ligase (lysS) from Archaeoglobus fulgidus (strain ATCC 49558 / DSM 4304 / JCM 9628 / NBRC 100126 / VC-16).